Consider the following 727-residue polypeptide: Glycerol-3-phosphate dehydrogenase, mitochondrial (727 aa).

Residues 1 to 42 (MAFQKAVKGTILVGGGALATVLGLSQFAHYRRKQMNLAYVKA) constitute a mitochondrion transit peptide. Residue 71–99 (DILVIGGGATGSGCALDAVTRGLKTALVE) participates in FAD binding. The residue at position 601 (Tyr-601) is a Phosphotyrosine. EF-hand domains lie at 623–658 (SDIDRYKKRFHKFDADKKGFITIVDVQRVLESINVQ) and 659–694 (MDENTLHEILNEVDLNKNGQVELNEFLQLMSAIQKG). The Ca(2+) site is built by Asp-672, Asn-674, Asn-676, Gln-678, and Glu-683.

The protein belongs to the FAD-dependent glycerol-3-phosphate dehydrogenase family. It depends on FAD as a cofactor.

It is found in the mitochondrion. It carries out the reaction a quinone + sn-glycerol 3-phosphate = dihydroxyacetone phosphate + a quinol. The protein operates within polyol metabolism; glycerol degradation via glycerol kinase pathway; glycerone phosphate from sn-glycerol 3-phosphate (aerobic route): step 1/1. Its activity is regulated as follows. Calcium-binding enhance the activity of the enzyme. Its function is as follows. Calcium-responsive mitochondrial glycerol-3-phosphate dehydrogenase which seems to be a key component of the pancreatic beta-cell glucose-sensing device. This Macaca fascicularis (Crab-eating macaque) protein is Glycerol-3-phosphate dehydrogenase, mitochondrial (GPD2).